The chain runs to 122 residues: Large ribosomal subunit protein uL14c (122 aa).

Belongs to the universal ribosomal protein uL14 family. In terms of assembly, part of the 50S ribosomal subunit.

It is found in the plastid. It localises to the chloroplast. Functionally, binds to 23S rRNA. This chain is Large ribosomal subunit protein uL14c, found in Phalaenopsis aphrodite subsp. formosana (Moth orchid).